The chain runs to 385 residues: 1-deoxy-D-xylulose 5-phosphate reductoisomerase 1 (385 aa).

NADPH-binding residues include Thr-11, Gly-12, Ser-13, Ile-14, Asn-39, and Asn-122. Lys-123 provides a ligand contact to 1-deoxy-D-xylulose 5-phosphate. NADPH is bound at residue Glu-124. Position 148 (Asp-148) interacts with Mn(2+). Residues Ser-149, Glu-150, Ser-174, and His-197 each coordinate 1-deoxy-D-xylulose 5-phosphate. A Mn(2+)-binding site is contributed by Glu-150. Gly-203 contacts NADPH. The 1-deoxy-D-xylulose 5-phosphate site is built by Ser-210, Asn-215, Lys-216, and Glu-219. Glu-219 lines the Mn(2+) pocket.

It belongs to the DXR family. Mg(2+) serves as cofactor. Mn(2+) is required as a cofactor.

The catalysed reaction is 2-C-methyl-D-erythritol 4-phosphate + NADP(+) = 1-deoxy-D-xylulose 5-phosphate + NADPH + H(+). Its pathway is isoprenoid biosynthesis; isopentenyl diphosphate biosynthesis via DXP pathway; isopentenyl diphosphate from 1-deoxy-D-xylulose 5-phosphate: step 1/6. In terms of biological role, catalyzes the NADPH-dependent rearrangement and reduction of 1-deoxy-D-xylulose-5-phosphate (DXP) to 2-C-methyl-D-erythritol 4-phosphate (MEP). The sequence is that of 1-deoxy-D-xylulose 5-phosphate reductoisomerase 1 from Bacillus cereus (strain ATCC 14579 / DSM 31 / CCUG 7414 / JCM 2152 / NBRC 15305 / NCIMB 9373 / NCTC 2599 / NRRL B-3711).